The following is a 285-amino-acid chain: MKADNPFDLLLPAAMAKVAEEAGVYKATKHPLKTFYLAITAGVFISIAFVFYITATTGTGTMPFGMAKLVGGICFSLGLILCVVCGADLFTSTVLIVVAKASGRITWGQLAKNWLNVYFGNLVGALLFVLLMWLSGEYMTANGQWGLNVLQTADHKVHHTFIEAVCLGILANLMVCLAVWMSYSGRSLMDKAFIMVLPVAMFVASGFEHSIANMFMIPMGIVIRDFASPEFWTAVGSAPENFSHLTVMNFITDNLIPVTIGNIIGGGLLVGLTYWVIYLRENDHH.

At 1–30 (MKADNPFDLLLPAAMAKVAEEAGVYKATKH) the chain is on the cytoplasmic side. The chain crosses the membrane as a helical span at residues 31 to 56 (PLKTFYLAITAGVFISIAFVFYITAT). Over 57–64 (TGTGTMPF) the chain is Periplasmic. Residues 65–85 (GMAKLVGGICFSLGLILCVVC) traverse the membrane as a helical segment. Over 86–112 (GADLFTSTVLIVVAKASGRITWGQLAK) the chain is Cytoplasmic. The helical transmembrane segment at 113–135 (NWLNVYFGNLVGALLFVLLMWLS) threads the bilayer. Topologically, residues 136–160 (GEYMTANGQWGLNVLQTADHKVHHT) are periplasmic. A helical membrane pass occupies residues 161–181 (FIEAVCLGILANLMVCLAVWM). Over 182 to 187 (SYSGRS) the chain is Cytoplasmic. A helical membrane pass occupies residues 188 to 205 (LMDKAFIMVLPVAMFVAS). Over 206-249 (GFEHSIANMFMIPMGIVIRDFASPEFWTAVGSAPENFSHLTVMN) the chain is Periplasmic. Residues 250–276 (FITDNLIPVTIGNIIGGGLLVGLTYWV) form a helical membrane-spanning segment. The Cytoplasmic portion of the chain corresponds to 277–285 (IYLRENDHH).

This sequence belongs to the FNT transporter (TC 1.A.16) family. In terms of assembly, homopentamer.

The protein localises to the cell inner membrane. It carries out the reaction formate(in) = formate(out). In terms of biological role, involved in the bidirectional transport of formate during mixed-acid fermentation. Functions to maintain relatively constant intracellular formate levels during growth, using different mechanisms for efflux and uptake of the anion. Is impermeable to water. The polypeptide is Formate channel FocA (Escherichia coli O157:H7).